We begin with the raw amino-acid sequence, 216 residues long: Phosphoenolpyruvate guanylyltransferase (216 aa).

Phosphoenolpyruvate-binding residues include threonine 139, glycine 155, and serine 158.

It belongs to the CofC family.

The catalysed reaction is phosphoenolpyruvate + GTP + H(+) = enolpyruvoyl-2-diphospho-5'-guanosine + diphosphate. It participates in cofactor biosynthesis; coenzyme F420 biosynthesis. In terms of biological role, guanylyltransferase that catalyzes the activation of phosphoenolpyruvate (PEP) as enolpyruvoyl-2-diphospho-5'-guanosine, via the condensation of PEP with GTP. It is involved in the biosynthesis of coenzyme F420, a hydride carrier cofactor. The sequence is that of Phosphoenolpyruvate guanylyltransferase from Streptomyces avermitilis (strain ATCC 31267 / DSM 46492 / JCM 5070 / NBRC 14893 / NCIMB 12804 / NRRL 8165 / MA-4680).